Consider the following 61-residue polypeptide: Large ribosomal subunit protein bL28 (61 aa).

The protein belongs to the bacterial ribosomal protein bL28 family.

The sequence is that of Large ribosomal subunit protein bL28 from Geobacillus kaustophilus (strain HTA426).